A 796-amino-acid chain; its full sequence is High affinity nerve growth factor receptor (796 aa).

An N-terminal signal peptide occupies residues 1–32 (MLRGGRRGQLGWHSWAAGPGSLLAWLILASAG). Residues 33-423 (AAPCPDACCP…TPFGVSVAVG (391 aa)) lie on the Extracellular side of the membrane. 2 cysteine pairs are disulfide-bonded: Cys-36/Cys-41 and Cys-40/Cys-50. N-linked (GlcNAc...) asparagine glycosylation is found at Asn-67, Asn-95, Asn-121, Asn-188, Asn-202, Asn-253, Asn-262, Asn-281, Asn-318, Asn-323, Asn-338, Asn-358, and Asn-401. LRR repeat units lie at residues 90 to 113 (LGEL…AFHF) and 116 to 137 (RLSR…TVQG). Residues 148–193 (NPLHCSCALRWLQRWEEEGLGGVPEQKLQCHGQGPLAHMPNASCGV) enclose the LRRCT domain. A disulfide bridge connects residues Cys-154 and Cys-191. 2 consecutive Ig-like C2-type domains span residues 194–283 (PTLK…VNVS) and 299–365 (WCIP…LAAN). Cys-215 and Cys-265 form a disulfide bridge. Cys-300 and Cys-345 are joined by a disulfide. The helical transmembrane segment at 424–439 (LAVFACLFLSTLLLVL) threads the bilayer. Over 440-796 (NKCGRRNKFG…APPVYLDVLG (357 aa)) the chain is Cytoplasmic. The interval 469-490 (MTLGGSSLSPTEGKGSGLQGHI) is interaction with SQSTM1. Position 496 is a phosphotyrosine; by autocatalysis (Tyr-496). The 272-residue stretch at 510-781 (IVLKWELGEG…HSIKDVHARL (272 aa)) folds into the Protein kinase domain. 516-524 (LGEGAFGKV) contributes to the ATP binding site. A DXXLL motif is present at residues 537–541 (DKMLV). Lys-544 contributes to the ATP binding site. Residues 607-611 (DAKLL) carry the DXXLL motif. Residue Asp-650 is the Proton acceptor of the active site. Residues Tyr-676, Tyr-680, Tyr-681, and Tyr-791 each carry the phosphotyrosine; by autocatalysis modification.

This sequence belongs to the protein kinase superfamily. Tyr protein kinase family. Insulin receptor subfamily. As to quaternary structure, exists in a dynamic equilibrium between monomeric (low affinity) and dimeric (high affinity) structures. Homodimerization is induced by binding of a NGF dimer. Interacts with SQSTM1; bridges NTRK1 to NGFR. Forms a ternary complex with NGFR and KIDINS220; this complex is affected by the expression levels of KIDINS220 and an increase in KIDINS220 expression leads to a decreased association of NGFR and NTRK1. Interacts with SH2D1A; regulates NTRK1. Interacts (phosphorylated upon activation by NGF) with SHC1; mediates SHC1 phosphorylation and activation. Interacts (phosphorylated upon activation by NGF) with PLCG1; mediates PLCG1 phosphorylation and activation. Interacts (phosphorylated) with SH2B1 and SH2B2. Interacts with GRB2. Interacts with PIK3R1. Interacts with FRS2. Interacts with SORT1; may regulate NTRK1 anterograde axonal transport. Interacts with RAB7A. Found in a complex, at least composed of KIDINS220, MAGI2, NTRK1 and RAPGEF2; the complex is mainly formed at late endosomes in a nerve growth factor (NGF)-dependent manner. Interacts with RAPGEF2; the interaction is strengthened after NGF stimulation. Interacts with PTPRS. Interacts with USP36; USP36 does not deubiquitinate NTRK1. Interacts with GGA3. Interacts with TSPAN1; this interaction promotes NTRK1 stability. Post-translationally, ligand-mediated autophosphorylation. Interaction with SQSTM1 is phosphotyrosine-dependent. Autophosphorylation at Tyr-496 mediates interaction and phosphorylation of SHC1. N-glycosylated. Isoform TrkA-I and isoform TrkA-II are N-glycosylated. In terms of processing, ubiquitinated. Undergoes polyubiquitination upon activation; regulated by NGFR. Ubiquitination by NEDD4L leads to degradation. Ubiquitination regulates the internalization of the receptor. As to expression, isoform TrkA-I is found in most non-neuronal tissues. Isoform TrkA-II is primarily expressed in neuronal cells. TrkA-III is specifically expressed by pluripotent neural stem and neural crest progenitors.

It localises to the cell membrane. The protein resides in the early endosome membrane. It is found in the late endosome membrane. Its subcellular location is the recycling endosome membrane. The catalysed reaction is L-tyrosyl-[protein] + ATP = O-phospho-L-tyrosyl-[protein] + ADP + H(+). With respect to regulation, the pro-survival signaling effect of NTRK1 in neurons requires its endocytosis into signaling early endosomes and its retrograde axonal transport. This is regulated by different proteins including CFL1, RAC1 and SORT1. NTF3 is unable to induce this signaling probably due to the lability of the NTF3-NTRK1 complex in endosomes. SH2D1A inhibits the autophosphorylation of the receptor, and alters the recruitment and activation of downstream effectors and signaling cascades. Regulated by NGFR. Its function is as follows. Receptor tyrosine kinase involved in the development and the maturation of the central and peripheral nervous systems through regulation of proliferation, differentiation and survival of sympathetic and nervous neurons. High affinity receptor for NGF which is its primary ligand. Can also bind and be activated by NTF3/neurotrophin-3. However, NTF3 only supports axonal extension through NTRK1 but has no effect on neuron survival. Upon dimeric NGF ligand-binding, undergoes homodimerization, autophosphorylation and activation. Recruits, phosphorylates and/or activates several downstream effectors including SHC1, FRS2, SH2B1, SH2B2 and PLCG1 that regulate distinct overlapping signaling cascades driving cell survival and differentiation. Through SHC1 and FRS2 activates a GRB2-Ras-MAPK cascade that regulates cell differentiation and survival. Through PLCG1 controls NF-Kappa-B activation and the transcription of genes involved in cell survival. Through SHC1 and SH2B1 controls a Ras-PI3 kinase-AKT1 signaling cascade that is also regulating survival. In absence of ligand and activation, may promote cell death, making the survival of neurons dependent on trophic factors. Resistant to NGF, it constitutively activates AKT1 and NF-kappa-B and is unable to activate the Ras-MAPK signaling cascade. Antagonizes the anti-proliferative NGF-NTRK1 signaling that promotes neuronal precursors differentiation. Isoform TrkA-III promotes angiogenesis and has oncogenic activity when overexpressed. The sequence is that of High affinity nerve growth factor receptor (NTRK1) from Homo sapiens (Human).